The following is a 245-amino-acid chain: 2,3-bisphosphoglycerate-dependent phosphoglycerate mutase (245 aa).

Substrate-binding positions include 8 to 15 (RHGQSLWN), 21 to 22 (TG), Arg60, 87 to 90 (ERHY), Lys98, 114 to 115 (RR), and 183 to 184 (GN). His9 functions as the Tele-phosphohistidine intermediate in the catalytic mechanism. Residue Glu87 is the Proton donor/acceptor of the active site.

The protein belongs to the phosphoglycerate mutase family. BPG-dependent PGAM subfamily.

It carries out the reaction (2R)-2-phosphoglycerate = (2R)-3-phosphoglycerate. It participates in carbohydrate degradation; glycolysis; pyruvate from D-glyceraldehyde 3-phosphate: step 3/5. Functionally, catalyzes the interconversion of 2-phosphoglycerate and 3-phosphoglycerate. In Bacillus mycoides (strain KBAB4) (Bacillus weihenstephanensis), this protein is 2,3-bisphosphoglycerate-dependent phosphoglycerate mutase.